A 571-amino-acid polypeptide reads, in one-letter code: Dihydroxy-acid dehydratase (571 aa).

A [2Fe-2S] cluster-binding site is contributed by Cys-56. Asp-88 contributes to the Mg(2+) binding site. Position 129 (Cys-129) interacts with [2Fe-2S] cluster. Positions 130 and 131 each coordinate Mg(2+). Residue Lys-131 is modified to N6-carboxylysine. Cys-201 contributes to the [2Fe-2S] cluster binding site. Glu-452 provides a ligand contact to Mg(2+). The active-site Proton acceptor is the Ser-478.

Belongs to the IlvD/Edd family. In terms of assembly, homodimer. It depends on [2Fe-2S] cluster as a cofactor. The cofactor is Mg(2+).

It catalyses the reaction (2R)-2,3-dihydroxy-3-methylbutanoate = 3-methyl-2-oxobutanoate + H2O. The catalysed reaction is (2R,3R)-2,3-dihydroxy-3-methylpentanoate = (S)-3-methyl-2-oxopentanoate + H2O. It functions in the pathway amino-acid biosynthesis; L-isoleucine biosynthesis; L-isoleucine from 2-oxobutanoate: step 3/4. It participates in amino-acid biosynthesis; L-valine biosynthesis; L-valine from pyruvate: step 3/4. In terms of biological role, functions in the biosynthesis of branched-chain amino acids. Catalyzes the dehydration of (2R,3R)-2,3-dihydroxy-3-methylpentanoate (2,3-dihydroxy-3-methylvalerate) into 2-oxo-3-methylpentanoate (2-oxo-3-methylvalerate) and of (2R)-2,3-dihydroxy-3-methylbutanoate (2,3-dihydroxyisovalerate) into 2-oxo-3-methylbutanoate (2-oxoisovalerate), the penultimate precursor to L-isoleucine and L-valine, respectively. This is Dihydroxy-acid dehydratase from Streptococcus suis (strain 98HAH33).